The sequence spans 333 residues: Electron transfer flavoprotein subunit alpha, mitochondrial (333 aa).

Residues 1–19 (MFRAAAPGQLRRAASLLRF) constitute a mitochondrion transit peptide. A domain I region spans residues 20–204 (QSTLVIAEHA…EISEWLDQKL (185 aa)). Lys59 is subject to N6-acetyllysine; alternate. An N6-succinyllysine; alternate modification is found at Lys59. The residue at position 62 (Lys62) is an N6-acetyllysine. Lys69 is subject to N6-acetyllysine; alternate. The residue at position 69 (Lys69) is an N6-succinyllysine; alternate. Lys75 bears the N6-acetyllysine mark. Thr93 is subject to Phosphothreonine. N6-acetyllysine is present on residues Lys101 and Lys139. A Phosphoserine modification is found at Ser140. Lys158 carries the N6-acetyllysine; alternate modification. The residue at position 158 (Lys158) is an N6-succinyllysine; alternate. Lys164 is modified (N6-acetyllysine). At Lys187 the chain carries N6-succinyllysine. Position 203 is an N6-acetyllysine; alternate (Lys203). Lys203 bears the N6-succinyllysine; alternate mark. The interval 205–333 (TKSDRPELTG…PEMTEILKKK (129 aa)) is domain II. N6-succinyllysine is present on Lys216. Arg223 is an FAD binding site. Lys226 and Lys232 each carry N6-acetyllysine; alternate. N6-succinyllysine; alternate occurs at positions 226 and 232. FAD is bound by residues Ser248, 263 to 266 (VGQT), 281 to 286 (SGAIQH), and Asn300. Lys301 is modified (N6-succinyllysine). FAD is bound at residue 318-319 (DL).

Belongs to the ETF alpha-subunit/FixB family. Heterodimer composed of ETFA and ETFB. Identified in a complex that contains ETFA, ETFB and ETFRF1. Interaction with ETFRF1 promotes dissociation of the bound FAD and loss of electron transfer activity. Interacts with TASOR. FAD is required as a cofactor.

The protein resides in the mitochondrion matrix. Heterodimeric electron transfer flavoprotein that accepts electrons from several mitochondrial dehydrogenases, including acyl-CoA dehydrogenases, glutaryl-CoA and sarcosine dehydrogenase. It transfers the electrons to the main mitochondrial respiratory chain via ETF-ubiquinone oxidoreductase (ETF dehydrogenase). Required for normal mitochondrial fatty acid oxidation and normal amino acid metabolism. This is Electron transfer flavoprotein subunit alpha, mitochondrial (ETFA) from Pongo abelii (Sumatran orangutan).